Here is a 620-residue protein sequence, read N- to C-terminus: Glutathione-regulated potassium-efflux system protein KefC (620 aa).

12 helical membrane passes run 4–24, 26–46, 54–74, 90–110, 114–134, 149–169, 178–198, 218–238, 270–290, 294–314, 327–347, and 359–379; these read HTLI…PIAV, LGLG…PWGL, SILH…GLEL, GALQ…LLGL, VAEL…MQAM, FAVL…IPLL, MGAF…VVLL, VFSA…EEVG, GLLL…GTLI, LRIV…LWLI, WFAV…GAAQ, and SLTL…VILN. The 120-residue stretch at 399–518 folds into the RCK N-terminal domain; it reads QPRVIIAGFG…AGVEKPERET (120 aa). The interval 597 to 620 is disordered; it reads GWQGTEEGKHTGNMADEPETKPSS.

This sequence belongs to the monovalent cation:proton antiporter 2 (CPA2) transporter (TC 2.A.37) family. KefC subfamily. As to quaternary structure, homodimer. Interacts with the regulatory subunit KefF.

It localises to the cell inner membrane. Functionally, pore-forming subunit of a potassium efflux system that confers protection against electrophiles. Catalyzes K(+)/H(+) antiport. This chain is Glutathione-regulated potassium-efflux system protein KefC, found in Escherichia coli (strain SMS-3-5 / SECEC).